A 126-amino-acid chain; its full sequence is Large ribosomal subunit protein bL12 (126 aa).

Belongs to the bacterial ribosomal protein bL12 family. Homodimer. Part of the ribosomal stalk of the 50S ribosomal subunit. Forms a multimeric L10(L12)X complex, where L10 forms an elongated spine to which 2 to 4 L12 dimers bind in a sequential fashion. Binds GTP-bound translation factors.

In terms of biological role, forms part of the ribosomal stalk which helps the ribosome interact with GTP-bound translation factors. Is thus essential for accurate translation. This Moorella thermoacetica (strain ATCC 39073 / JCM 9320) protein is Large ribosomal subunit protein bL12.